The following is a 334-amino-acid chain: MSEPIRVLVTGAAGQIAYSLLYSIGNGSVFGKDQPIILVLLDITPMMGVLDGVLMELQDCALPLLKDVIATDKEDVAFKDLDVAILVGSMPRRDGMERKDLLKANVKIFKCQGAALEKYAKKSVKVIVVGNPANTNCLTACKSAPSIPKENFSCLTRLDHNRAKAQIALKLGVTSDDVKNVIIWGNHSSTQYPDVSHAKVKLHGKEVGVYDALKDDSWLKGEFITTVQQRGAAVIKARKLSSAMSAAKAICDHVRDIWFGTPEGEFVSMGIISDGNPYGVPDDLLYSFPVTIKNKTWKVVEGLTINDFSREKMDLTAKELAEEKETAFEFLSSA.

An N-acetylserine modification is found at serine 2. Residues 11–17 and aspartate 42 contribute to the NAD(+) site; that span reads GAAGQIA. Substrate contacts are provided by arginine 92 and arginine 98. Residue asparagine 105 participates in NAD(+) binding. Lysine 110 bears the N6-succinyllysine mark. An NAD(+)-binding site is contributed by glutamine 112. N6-acetyllysine occurs at positions 118 and 121. 129-131 contributes to the NAD(+) binding site; the sequence is VGN. The substrate site is built by asparagine 131 and arginine 162. The active-site Proton acceptor is histidine 187. Position 214 is an N6-succinyllysine (lysine 214). The residue at position 217 (serine 217) is a Phosphoserine. Arginine 230 bears the Omega-N-methylarginine mark. Position 241 is a phosphoserine (serine 241). Position 298 is an N6-acetyllysine; alternate (lysine 298). An N6-succinyllysine; alternate modification is found at lysine 298. A Phosphoserine modification is found at serine 309. N6-succinyllysine is present on lysine 318. Phosphoserine occurs at positions 332 and 333.

It belongs to the LDH/MDH superfamily. MDH type 2 family. Homodimer. Post-translationally, ISGylated. Acetylation at Lys-118 dramatically enhances enzymatic activity and promotes adipogenic differentiation.

The protein resides in the cytoplasm. It localises to the cytosol. The enzyme catalyses (S)-malate + NAD(+) = oxaloacetate + NADH + H(+). It catalyses the reaction (2R)-2-hydroxy-3-(4-hydroxyphenyl)propanoate + NAD(+) = 3-(4-hydroxyphenyl)pyruvate + NADH + H(+). It carries out the reaction (S)-2-hydroxyglutarate + NAD(+) = 2-oxoglutarate + NADH + H(+). Functionally, catalyzes the reduction of aromatic alpha-keto acids in the presence of NADH. Plays essential roles in the malate-aspartate shuttle and the tricarboxylic acid cycle, important in mitochondrial NADH supply for oxidative phosphorylation. Catalyzes the reduction of 2-oxoglutarate to 2-hydroxyglutarate, leading to elevated reactive oxygen species (ROS). The protein is Malate dehydrogenase, cytoplasmic (MDH1) of Felis catus (Cat).